A 687-amino-acid polypeptide reads, in one-letter code: Methionine--tRNA ligase (687 aa).

The short motif at 14 to 24 is the 'HIGH' region element; that stretch reads PYANGYIHLGH. Cysteine 145, cysteine 148, cysteine 158, and cysteine 161 together coordinate Zn(2+). A 'KMSKS' region motif is present at residues 329-333; that stretch reads KMSKS. Residue lysine 332 coordinates ATP. Residues 585-687 enclose the tRNA-binding domain; it reads DFDKVDLRIG…DGAQVGQRVK (103 aa).

It belongs to the class-I aminoacyl-tRNA synthetase family. MetG type 1 subfamily. In terms of assembly, homodimer. The cofactor is Zn(2+).

The protein localises to the cytoplasm. It carries out the reaction tRNA(Met) + L-methionine + ATP = L-methionyl-tRNA(Met) + AMP + diphosphate. Functionally, is required not only for elongation of protein synthesis but also for the initiation of all mRNA translation through initiator tRNA(fMet) aminoacylation. This is Methionine--tRNA ligase from Bdellovibrio bacteriovorus (strain ATCC 15356 / DSM 50701 / NCIMB 9529 / HD100).